Here is a 394-residue protein sequence, read N- to C-terminus: Chalcone synthase 8 (394 aa).

Residue Cys-165 is part of the active site.

It belongs to the thiolase-like superfamily. Chalcone/stilbene synthases family.

It carries out the reaction (E)-4-coumaroyl-CoA + 3 malonyl-CoA + 3 H(+) = 2',4,4',6'-tetrahydroxychalcone + 3 CO2 + 4 CoA. It participates in secondary metabolite biosynthesis; flavonoid biosynthesis. In terms of biological role, the primary product of this enzyme is 4,2',4',6'-tetrahydroxychalcone (also termed naringenin-chalcone or chalcone) which can under specific conditions spontaneously isomerize into naringenin. This is Chalcone synthase 8 (CHS8) from Bromheadia finlaysoniana (Orchid).